Consider the following 175-residue polypeptide: ATP-dependent protease subunit HslV (175 aa).

Threonine 2 is a catalytic residue. Alanine 156, cysteine 159, and threonine 162 together coordinate Na(+).

It belongs to the peptidase T1B family. HslV subfamily. In terms of assembly, a double ring-shaped homohexamer of HslV is capped on each side by a ring-shaped HslU homohexamer. The assembly of the HslU/HslV complex is dependent on binding of ATP.

The protein localises to the cytoplasm. The catalysed reaction is ATP-dependent cleavage of peptide bonds with broad specificity.. With respect to regulation, allosterically activated by HslU binding. Its function is as follows. Protease subunit of a proteasome-like degradation complex believed to be a general protein degrading machinery. This is ATP-dependent protease subunit HslV from Rhizobium etli (strain CIAT 652).